The chain runs to 508 residues: Glycogen synthase (508 aa).

ADP-alpha-D-glucose is bound at residue lysine 27.

This sequence belongs to the glycosyltransferase 1 family. Bacterial/plant glycogen synthase subfamily.

The catalysed reaction is [(1-&gt;4)-alpha-D-glucosyl](n) + ADP-alpha-D-glucose = [(1-&gt;4)-alpha-D-glucosyl](n+1) + ADP + H(+). It functions in the pathway glycan biosynthesis; glycogen biosynthesis. Its function is as follows. Synthesizes alpha-1,4-glucan chains using ADP-glucose. The protein is Glycogen synthase of Photobacterium profundum (strain SS9).